The sequence spans 863 residues: Neuroligin-1 (863 aa).

The N-terminal stretch at 1–45 (MALPRCTWPNYVWRAVMACLVHRGLGAPLTLCMLGCLLQAGHVLS) is a signal peptide. The Extracellular segment spans residues 46–717 (QKLDDVDPLV…DQRDYSTELS (672 aa)). A glycan (N-linked (GlcNAc...) (complex) asparagine) is linked at N109. A disulfide bridge connects residues C117 and C153. Residues 183 to 212 (KGGPLTKKQTDDLGDNDGAEDEDIRDSGGP) are disordered. Acidic residues predominate over residues 194-206 (DLGDNDGAEDEDI). 2 N-linked (GlcNAc...) (complex) asparagine glycosylation sites follow: N323 and N363. Intrachain disulfides connect C362–C373 and C532–C566. An N-linked (GlcNAc...) asparagine glycan is attached at N567. The disordered stretch occupies residues 670–708 (PSTDITFRPTRKNSVPVTSAFPTAKQDDPKQQPSPFSVD). Residues 681 to 690 (KNSVPVTSAF) show a composition bias toward polar residues. O-linked (GalNAc...) serine glycans are attached at residues S703 and S706. A helical transmembrane segment spans residues 718–738 (VTIAVGASLLFLNILAFAALY). Topologically, residues 739-863 (YKKDKRRHDV…HPHSHSTTRV (125 aa)) are cytoplasmic. The tract at residues 842–863 (GGQNNTLPHPHPHPHSHSTTRV) is disordered. Residues 851 to 863 (PHPHPHSHSTTRV) show a composition bias toward basic residues.

This sequence belongs to the type-B carboxylesterase/lipase family. As to quaternary structure, interacts with neurexins NRXN1, NRXN2 and NRXN3. Interaction with neurexins is mediated by heparan sulfate glycan modification on neurexin. Interacts with NLGN3. Interacts with AIP1 and PDZRN3. Interacts (via its C-terminus) with DLG4/PSD-95 (via PDZ domain 3). Interacts with GOPC. In terms of tissue distribution, expressed in the blood vessel walls (at protein level). Highly expressed in brain through prenatal stages, and at lower levels in pancreas islet beta cells.

Its subcellular location is the cell membrane. It localises to the postsynaptic density. It is found in the synaptic cleft. The protein resides in the synaptic cell membrane. Its function is as follows. Cell surface protein involved in cell-cell-interactions via its interactions with neurexin family members. Plays a role in synapse function and synaptic signal transmission, and probably mediates its effects by recruiting and clustering other synaptic proteins. May promote the initial formation of synapses, but is not essential for this. In vitro, triggers the de novo formation of presynaptic structures. May be involved in specification of excitatory synapses. Required to maintain wakefulness quality and normal synchrony of cerebral cortex activity during wakefulness and sleep. The protein is involved in nervous system development. This chain is Neuroligin-1 (NLGN1), found in Homo sapiens (Human).